Consider the following 490-residue polypeptide: Cheilanthifoline synthase (490 aa).

A helical transmembrane segment spans residues 2 to 22 (EESLWVVTATVVVVFAIAKLL). Residue Cys432 participates in heme binding.

The protein belongs to the cytochrome P450 family. It depends on heme as a cofactor. Expressed in roots. Detected in leaves and stems.

Its subcellular location is the endoplasmic reticulum membrane. The catalysed reaction is (S)-scoulerine + reduced [NADPH--hemoprotein reductase] + O2 = (S)-cheilanthifoline + oxidized [NADPH--hemoprotein reductase] + 2 H2O + H(+). It functions in the pathway alkaloid biosynthesis. In terms of biological role, methylenedioxy bridge-forming cytochrome P450 involved in the biosynthesis of isoquinoline alkaloids. Converts (S)-scoulerine into (R,S)-cheilanthifoline. Catalyzes an oxidative reaction that does not incorporate oxygen into the product. The protein is Cheilanthifoline synthase (CYP719A5) of Eschscholzia californica (California poppy).